A 159-amino-acid chain; its full sequence is Large ribosomal subunit protein uL22 (159 aa).

This sequence belongs to the universal ribosomal protein uL22 family. As to quaternary structure, part of the 50S ribosomal subunit.

This protein binds specifically to 23S rRNA; its binding is stimulated by other ribosomal proteins, e.g. L4, L17, and L20. It is important during the early stages of 50S assembly. It makes multiple contacts with different domains of the 23S rRNA in the assembled 50S subunit and ribosome. In terms of biological role, the globular domain of the protein is located near the polypeptide exit tunnel on the outside of the subunit, while an extended beta-hairpin is found that lines the wall of the exit tunnel in the center of the 70S ribosome. In Thermotoga sp. (strain RQ2), this protein is Large ribosomal subunit protein uL22.